Reading from the N-terminus, the 265-residue chain is Cytochrome c oxidase subunit 3 (265 aa).

Helical transmembrane passes span 16–36 (PWPL…VMYM), 41–61 (GGGT…FVWW), 85–105 (GIIL…WAFF), 138–158 (LILL…LAGL), 162–182 (AVYA…FQGI), 200–220 (FFLA…FLII), and 242–262 (AFYW…IYWW).

Belongs to the cytochrome c oxidase subunit 3 family. In terms of assembly, component of the cytochrome c oxidase (complex IV, CIV), a multisubunit enzyme composed of a catalytic core of 3 subunits and several supernumerary subunits. The complex exists as a monomer or a dimer and forms supercomplexes (SCs) in the inner mitochondrial membrane with ubiquinol-cytochrome c oxidoreductase (cytochrome b-c1 complex, complex III, CIII).

It is found in the mitochondrion inner membrane. It carries out the reaction 4 Fe(II)-[cytochrome c] + O2 + 8 H(+)(in) = 4 Fe(III)-[cytochrome c] + 2 H2O + 4 H(+)(out). Its function is as follows. Component of the cytochrome c oxidase, the last enzyme in the mitochondrial electron transport chain which drives oxidative phosphorylation. The respiratory chain contains 3 multisubunit complexes succinate dehydrogenase (complex II, CII), ubiquinol-cytochrome c oxidoreductase (cytochrome b-c1 complex, complex III, CIII) and cytochrome c oxidase (complex IV, CIV), that cooperate to transfer electrons derived from NADH and succinate to molecular oxygen, creating an electrochemical gradient over the inner membrane that drives transmembrane transport and the ATP synthase. Cytochrome c oxidase is the component of the respiratory chain that catalyzes the reduction of oxygen to water. Electrons originating from reduced cytochrome c in the intermembrane space (IMS) are transferred via the dinuclear copper A center (CU(A)) of subunit 2 and heme A of subunit 1 to the active site in subunit 1, a binuclear center (BNC) formed by heme A3 and copper B (CU(B)). The BNC reduces molecular oxygen to 2 water molecules using 4 electrons from cytochrome c in the IMS and 4 protons from the mitochondrial matrix. The chain is Cytochrome c oxidase subunit 3 (COX3) from Marchantia polymorpha (Common liverwort).